A 381-amino-acid chain; its full sequence is ELMO domain-containing protein 3 (381 aa).

Over residues 1 to 17 (MNENFHSFHEKELRDGQ) the composition is skewed to basic and acidic residues. The interval 1-31 (MNENFHSFHEKELRDGQVESVSAGSSPPCDK) is disordered. The ELMO domain maps to 170 to 324 (MHGRVLQTIY…DLEMSAKKSP (155 aa)).

It is found in the cell projection. The protein localises to the stereocilium. The protein resides in the kinocilium. Its subcellular location is the cytoplasm. It localises to the cytoskeleton. Its function is as follows. Acts as a GTPase-activating protein (GAP) for ARL2 with low specific activity. This Bos taurus (Bovine) protein is ELMO domain-containing protein 3 (ELMOD3).